Consider the following 255-residue polypeptide: 4-hydroxy-tetrahydrodipicolinate reductase (255 aa).

Residues 9 to 14, 89 to 91, and 115 to 118 each bind NAD(+); these read GFKGKM, GTT, and APNF. The Proton donor/acceptor role is filled by His-145. His-146 lines the (S)-2,3,4,5-tetrahydrodipicolinate pocket. Residue Lys-149 is the Proton donor of the active site. Position 155 to 156 (155 to 156) interacts with (S)-2,3,4,5-tetrahydrodipicolinate; sequence GT.

It belongs to the DapB family.

Its subcellular location is the cytoplasm. It carries out the reaction (S)-2,3,4,5-tetrahydrodipicolinate + NAD(+) + H2O = (2S,4S)-4-hydroxy-2,3,4,5-tetrahydrodipicolinate + NADH + H(+). The enzyme catalyses (S)-2,3,4,5-tetrahydrodipicolinate + NADP(+) + H2O = (2S,4S)-4-hydroxy-2,3,4,5-tetrahydrodipicolinate + NADPH + H(+). It participates in amino-acid biosynthesis; L-lysine biosynthesis via DAP pathway; (S)-tetrahydrodipicolinate from L-aspartate: step 4/4. Its function is as follows. Catalyzes the conversion of 4-hydroxy-tetrahydrodipicolinate (HTPA) to tetrahydrodipicolinate. The chain is 4-hydroxy-tetrahydrodipicolinate reductase from Streptococcus gordonii (strain Challis / ATCC 35105 / BCRC 15272 / CH1 / DL1 / V288).